The primary structure comprises 427 residues: 3-phosphoshikimate 1-carboxyvinyltransferase (427 aa).

3-phosphoshikimate is bound by residues lysine 22, serine 23, and arginine 27. Lysine 22 is a phosphoenolpyruvate binding site. 2 residues coordinate phosphoenolpyruvate: glycine 96 and arginine 124. Residues serine 169, serine 170, glutamine 171, serine 197, aspartate 313, asparagine 336, and lysine 340 each contribute to the 3-phosphoshikimate site. Position 171 (glutamine 171) interacts with phosphoenolpyruvate. Aspartate 313 (proton acceptor) is an active-site residue. Residues arginine 344, arginine 386, and lysine 411 each contribute to the phosphoenolpyruvate site.

The protein belongs to the EPSP synthase family. As to quaternary structure, monomer.

It localises to the cytoplasm. It catalyses the reaction 3-phosphoshikimate + phosphoenolpyruvate = 5-O-(1-carboxyvinyl)-3-phosphoshikimate + phosphate. It participates in metabolic intermediate biosynthesis; chorismate biosynthesis; chorismate from D-erythrose 4-phosphate and phosphoenolpyruvate: step 6/7. Functionally, catalyzes the transfer of the enolpyruvyl moiety of phosphoenolpyruvate (PEP) to the 5-hydroxyl of shikimate-3-phosphate (S3P) to produce enolpyruvyl shikimate-3-phosphate and inorganic phosphate. The chain is 3-phosphoshikimate 1-carboxyvinyltransferase from Salmonella typhi.